Consider the following 333-residue polypeptide: Secreted mono- and diacylglycerol lipase 1 (333 aa).

A signal peptide spans 1–16 (MMLILSILSIIAFAAA). Intrachain disulfides connect cysteine 56–cysteine 268 and cysteine 276–cysteine 298. Serine 176 (nucleophile) is an active-site residue. Residues aspartate 230 and histidine 288 contribute to the active site.

It belongs to the AB hydrolase superfamily. Lipase family. Class 3 subfamily.

It is found in the secreted. The enzyme catalyses a monoacylglycerol + H2O = glycerol + a fatty acid + H(+). It carries out the reaction a diacylglycerol + H2O = a monoacylglycerol + a fatty acid + H(+). Functionally, secreted mono- and diacylglycerol lipase that allows the use of hydrolyzed lipids as carbon source and might play a role in pathogenicity. Shows lipolytic activity towards olive oil and p-nitrophenylpalmitate. This Fusarium solani (Filamentous fungus) protein is Secreted mono- and diacylglycerol lipase 1.